A 595-amino-acid polypeptide reads, in one-letter code: MATKARVMYDFAAEPGNNELTVNEGEIITITNPDVGGGWLEGRNIKGERGLVPTDYVEILPSDGKDQFSCGNSVADQAFLDSLSASTAQASSSAASNNHQVGSGNDPWSAWSASKSGNWESSEGWGAQPEGAGAQRNTNTPNNWDTAFGHPQAYQGPATGDDDDWDEDWDGPKSSSYFKDSESADAGGAQRGNSRASSSSMKIPLNKFPGFAKPGTEQYLLAKQLAKPKEKIPIIVGDYGPMWVYPTSTFDCVVADPRKGSKMYGLKSYIEYQLTPTNTNRSVNHRYKHFDWLYERLLVKFGSAIPIPSLPDKQVTGRFEEEFIKMRMERLQAWMTRMCRHPVISESEVFQQFLNFRDEKEWKTGKRKAERDELAGVMIFSTMEPEAPDLDLVEIEQKCEAVGKFTKAMDDGVKELLTVGQEHWKRCTGPLPKEYQKIGKALQSLATVFSSSGYQGETDLNDAITEAGKTYEEIASLVAEQPKKDLHFLMECNHEYKGFLGCFPDIIGTHKGAIEKVKESDKLVATSKITLQDKQNMVKRVSIMSYALQAEMNHFHSNRIYDYNSVIRLYLEQQVQFYETIAEKLRQALSRFPVM.

In terms of domain architecture, SH3 spans 1-62 (MATKARVMYD…PTDYVEILPS (62 aa)). The disordered stretch occupies residues 91 to 201 (SSSAASNNHQ…GNSRASSSSM (111 aa)). Composition is skewed to polar residues over residues 111-121 (WSASKSGNWES) and 135-145 (QRNTNTPNNWD). Phosphoserine occurs at positions 116 and 121. Acidic residues predominate over residues 160-169 (GDDDDWDEDW). Polar residues predominate over residues 191–201 (RGNSRASSSSM). Phosphoserine occurs at positions 197 and 200. Residues 201 to 213 (MKIPLNKFPGFAK) are critical for tubulation activity. At threonine 216 the chain carries Phosphothreonine. Position 239 is a phosphotyrosine (tyrosine 239). A PX domain is found at 250-361 (FDCVVADPRK…QFLNFRDEKE (112 aa)). Residues arginine 286, lysine 288, and arginine 327 each contribute to the a 1,2-diacyl-sn-glycero-3-phospho-(1D-myo-inositol-4,5-bisphosphate) site. Lysine 288 is subject to N6-acetyllysine. In terms of domain architecture, BAR spans 392–595 (LVEIEQKCEA…RQALSRFPVM (204 aa)).

This sequence belongs to the sorting nexin family. In terms of assembly, homodimer, and homooligomer. Heterodimer with SNX18. Interacts with ITCH. Interacts (via SH3 domain) with TNK2, WASL and ACTR3. Identified in a complex with TNK2 and clathrin heavy chains. Identified in a complex with the AP-2 complex, clathrin and DNM2. Interacts (via SH3 domain) with DNM1 and DNM2. Identified in an oligomeric complex containing DNM1 and SNX9. Interacts with FCHSD1. Interacts with ADAM9 and ADAM15 cytoplasmic tails. Ubiquitinated by ITCH. Post-translationally, phosphorylated on tyrosine residues by TNK2. Phosphorylation promotes its activity in the degradation of EGFR. Widely expressed, with highest levels in heart and placenta, and lowest levels in thymus and peripheral blood leukocytes.

It localises to the cytoplasmic vesicle membrane. The protein resides in the cell membrane. Its subcellular location is the cytoplasmic vesicle. It is found in the clathrin-coated vesicle. The protein localises to the golgi apparatus. It localises to the trans-Golgi network. The protein resides in the cell projection. Its subcellular location is the ruffle. It is found in the cytoplasm. Functionally, involved in endocytosis and intracellular vesicle trafficking, both during interphase and at the end of mitosis. Required for efficient progress through mitosis and cytokinesis. Required for normal formation of the cleavage furrow at the end of mitosis. Plays a role in endocytosis via clathrin-coated pits, but also clathrin-independent, actin-dependent fluid-phase endocytosis. Plays a role in macropinocytosis. Promotes internalization of TNFR. Promotes degradation of EGFR after EGF signaling. Stimulates the GTPase activity of DNM1. Promotes DNM1 oligomerization. Promotes activation of the Arp2/3 complex by WASL, and thereby plays a role in the reorganization of the F-actin cytoskeleton. Binds to membranes enriched in phosphatidylinositol 4,5-bisphosphate and promotes membrane tubulation. Has lower affinity for membranes enriched in phosphatidylinositol 3-phosphate. The chain is Sorting nexin-9 (SNX9) from Homo sapiens (Human).